The sequence spans 225 residues: MMQVRMQAEPQQLTLALSKGRIFEETLPLLEAAGIKVTEDPETSRKLILQTSDANVRVIIVRASDVPTYVQYGAADFGVAGKDVLLEHGGEGLYQPIDLHIAKCRMSVAVKDGFDYASAVQQGARLRVVTKYVQTAREHFAAKGVHVDLIKLYGSMELGPLVGLADAIVDLVSTGSTLRANQLVEVEHIMEISSRLVVNKAALKLKRERLQPILEAFEKASKRSS.

The protein belongs to the ATP phosphoribosyltransferase family. Short subfamily. In terms of assembly, heteromultimer composed of HisG and HisZ subunits.

Its subcellular location is the cytoplasm. It carries out the reaction 1-(5-phospho-beta-D-ribosyl)-ATP + diphosphate = 5-phospho-alpha-D-ribose 1-diphosphate + ATP. Its pathway is amino-acid biosynthesis; L-histidine biosynthesis; L-histidine from 5-phospho-alpha-D-ribose 1-diphosphate: step 1/9. Functionally, catalyzes the condensation of ATP and 5-phosphoribose 1-diphosphate to form N'-(5'-phosphoribosyl)-ATP (PR-ATP). Has a crucial role in the pathway because the rate of histidine biosynthesis seems to be controlled primarily by regulation of HisG enzymatic activity. The sequence is that of ATP phosphoribosyltransferase from Herminiimonas arsenicoxydans.